Reading from the N-terminus, the 444-residue chain is Magnesium transporter MRS2-F (444 aa).

The segment at 128–155 is disordered; sequence FTDMEGESSAVTSPFPALTSTTPNELEM. Residues 145 to 155 show a composition bias toward polar residues; that stretch reads LTSTTPNELEM. Residues 195 to 258 are a coiled coil; that stretch reads VCLESACRSL…QKVRDELEHL (64 aa). Residues 370–390 traverse the membrane as a helical segment; that stretch reads GVMLSTATVVITAGVAVVGLF. A Required for magnesium transport activity motif is present at residues 391–393; it reads GMN. Residues 415–435 traverse the membrane as a helical segment; it reads FWETTLGTIAGCTVMYIVAMG.

It belongs to the CorA metal ion transporter (MIT) (TC 1.A.35.5) family.

It is found in the membrane. Functionally, magnesium transporter that may mediate the influx of magnesium. This Oryza sativa subsp. indica (Rice) protein is Magnesium transporter MRS2-F (MRS2-F).